A 702-amino-acid chain; its full sequence is Arginine decarboxylase 1 (702 aa).

The residue at position 151 (Lys-151) is an N6-(pyridoxal phosphate)lysine. Ile-336–Tyr-346 contacts substrate. Residues Ala-668–Ala-686 show a composition bias toward low complexity. The tract at residues Ala-668–Val-702 is disordered.

It belongs to the Orn/Lys/Arg decarboxylase class-II family. SpeA subfamily. Requires pyridoxal 5'-phosphate as cofactor. It depends on Mg(2+) as a cofactor. Expressed in roots, leaves and stems (at protein level).

The catalysed reaction is L-arginine + H(+) = agmatine + CO2. It functions in the pathway amine and polyamine biosynthesis; agmatine biosynthesis; agmatine from L-arginine: step 1/1. This is Arginine decarboxylase 1 (ADC1) from Oryza sativa subsp. japonica (Rice).